The chain runs to 261 residues: Cytochrome c oxidase subunit 3 (261 aa).

Topologically, residues 1-15 (MTHQTHAYHMVNPSP) are mitochondrial matrix. A helical membrane pass occupies residues 16-33 (WPLTGAFSALLLTSGLVM). The Mitochondrial intermembrane segment spans residues 34 to 38 (WFHYN). The chain crosses the membrane as a helical span at residues 39 to 62 (SITLLTLGLLTNILTMYQWWRDVI). Residues 63 to 77 (REGTYQGHHTPIVQK) are Mitochondrial matrix-facing. A helical membrane pass occupies residues 78–99 (GLRYGMILFIVSEVFFFAGFFW). The Mitochondrial intermembrane segment spans residues 100-129 (AFYHSSLVPTHDLGGCWPPTGISPLNPLEV). The chain crosses the membrane as a helical span at residues 130–150 (PLLNTSVLLASGVSITWAHHS). At 151 to 156 (LMEGKR) the chain is on the mitochondrial matrix side. Residues 157–178 (NHMNQALLITIMLGLYFTILQA) traverse the membrane as a helical segment. The Mitochondrial intermembrane segment spans residues 179 to 198 (SEYFETSFSISDGIYGSTFF). A helical transmembrane segment spans residues 199 to 224 (MATGFHGLHVIIGSTFLIVCLLRQLK). Topologically, residues 225–232 (FHFTSKHH) are mitochondrial matrix. The chain crosses the membrane as a helical span at residues 233-255 (FGFEAAAWYWHFVDVVWLFLYVS). The Mitochondrial intermembrane segment spans residues 256 to 261 (IYWWGS).

It belongs to the cytochrome c oxidase subunit 3 family. Component of the cytochrome c oxidase (complex IV, CIV), a multisubunit enzyme composed of 14 subunits. The complex is composed of a catalytic core of 3 subunits MT-CO1, MT-CO2 and MT-CO3, encoded in the mitochondrial DNA, and 11 supernumerary subunits COX4I, COX5A, COX5B, COX6A, COX6B, COX6C, COX7A, COX7B, COX7C, COX8 and NDUFA4, which are encoded in the nuclear genome. The complex exists as a monomer or a dimer and forms supercomplexes (SCs) in the inner mitochondrial membrane with NADH-ubiquinone oxidoreductase (complex I, CI) and ubiquinol-cytochrome c oxidoreductase (cytochrome b-c1 complex, complex III, CIII), resulting in different assemblies (supercomplex SCI(1)III(2)IV(1) and megacomplex MCI(2)III(2)IV(2)).

The protein localises to the mitochondrion inner membrane. It catalyses the reaction 4 Fe(II)-[cytochrome c] + O2 + 8 H(+)(in) = 4 Fe(III)-[cytochrome c] + 2 H2O + 4 H(+)(out). Functionally, component of the cytochrome c oxidase, the last enzyme in the mitochondrial electron transport chain which drives oxidative phosphorylation. The respiratory chain contains 3 multisubunit complexes succinate dehydrogenase (complex II, CII), ubiquinol-cytochrome c oxidoreductase (cytochrome b-c1 complex, complex III, CIII) and cytochrome c oxidase (complex IV, CIV), that cooperate to transfer electrons derived from NADH and succinate to molecular oxygen, creating an electrochemical gradient over the inner membrane that drives transmembrane transport and the ATP synthase. Cytochrome c oxidase is the component of the respiratory chain that catalyzes the reduction of oxygen to water. Electrons originating from reduced cytochrome c in the intermembrane space (IMS) are transferred via the dinuclear copper A center (CU(A)) of subunit 2 and heme A of subunit 1 to the active site in subunit 1, a binuclear center (BNC) formed by heme A3 and copper B (CU(B)). The BNC reduces molecular oxygen to 2 water molecules using 4 electrons from cytochrome c in the IMS and 4 protons from the mitochondrial matrix. This chain is Cytochrome c oxidase subunit 3 (mt-Co3), found in Mus musculus (Mouse).